The sequence spans 140 residues: ATP synthase epsilon chain (140 aa).

Belongs to the ATPase epsilon chain family. In terms of assembly, F-type ATPases have 2 components, CF(1) - the catalytic core - and CF(0) - the membrane proton channel. CF(1) has five subunits: alpha(3), beta(3), gamma(1), delta(1), epsilon(1). CF(0) has three main subunits: a, b and c.

It is found in the cell inner membrane. Functionally, produces ATP from ADP in the presence of a proton gradient across the membrane. The chain is ATP synthase epsilon chain from Neisseria meningitidis serogroup C (strain 053442).